The sequence spans 88 residues: uncharacterized protein (88 aa).

A run of 2 helical transmembrane segments spans residues 5–25 (AIPF…LLFV) and 36–56 (CYYL…VMIF).

It localises to the membrane. This is an uncharacterized protein from Saccharomyces cerevisiae (strain ATCC 204508 / S288c) (Baker's yeast).